A 337-amino-acid polypeptide reads, in one-letter code: Glyceraldehyde-3-phosphate dehydrogenase 2, cytosolic (337 aa).

The interval M1–N151 is binding to NAD. NAD(+)-binding positions include R13–I14, D35, and R82. The segment at A152–Q337 is catalytic. D-glyceraldehyde 3-phosphate is bound by residues S153–T155, T184, T213–G214, and R236. The Nucleophile role is filled by C154. N318 is a binding site for NAD(+).

Belongs to the glyceraldehyde-3-phosphate dehydrogenase family. In terms of assembly, homotetramer. In terms of tissue distribution, developing seeds, seedling roots and shoots, and embryo.

It localises to the cytoplasm. It catalyses the reaction D-glyceraldehyde 3-phosphate + phosphate + NAD(+) = (2R)-3-phospho-glyceroyl phosphate + NADH + H(+). It functions in the pathway carbohydrate degradation; glycolysis; pyruvate from D-glyceraldehyde 3-phosphate: step 1/5. In terms of biological role, key enzyme in glycolysis that catalyzes the first step of the pathway by converting D-glyceraldehyde 3-phosphate (G3P) into 3-phospho-D-glyceroyl phosphate. Essential for the maintenance of cellular ATP levels and carbohydrate metabolism. The polypeptide is Glyceraldehyde-3-phosphate dehydrogenase 2, cytosolic (GAPC2) (Zea mays (Maize)).